We begin with the raw amino-acid sequence, 329 residues long: Putative glucose-6-phosphate 1-epimerase (329 aa).

Residues 1–13 show a composition bias toward low complexity; the sequence is MAAPAPAGAAASP. The tract at residues 1 to 20 is disordered; sequence MAAPAPAGAAASPSPKPQLP. Positions 82, 100, and 105 each coordinate substrate. Histidine 183 is an active-site residue. Residue aspartate 228 coordinates substrate. The active site involves glutamate 287.

It belongs to the glucose-6-phosphate 1-epimerase family.

It carries out the reaction alpha-D-glucose 6-phosphate = beta-D-glucose 6-phosphate. This chain is Putative glucose-6-phosphate 1-epimerase, found in Cenchrus ciliaris (Buffelgrass).